Reading from the N-terminus, the 1008-residue chain is Retinoblastoma-related protein (1008 aa).

A disordered region spans residues lysine 375–proline 394. Residues serine 380 to leucine 392 are compositionally biased toward polar residues. The interval threonine 404–leucine 605 is domain A. The tract at residues threonine 404–proline 853 is pocket. Positions threonine 606–glutamate 722 are spacer. The domain B stretch occupies residues threonine 723 to proline 853. Disordered regions lie at residues lysine 865–aspartate 899 and leucine 988–glutamate 1008.

This sequence belongs to the retinoblastoma protein (RB) family.

The protein localises to the nucleus. In terms of biological role, regulator of biological processes that recruits a histone deacetylase to control gene transcription. May play a role in the entry into mitosis, negatively regulating the cell proliferation. Formation of stable complexes with geminiviridae replication-associated proteins may create a cellular environment which favors viral DNA replication. In Pilosella officinarum (Mouse-ear hawkweed), this protein is Retinoblastoma-related protein (RBR).